Here is a 712-residue protein sequence, read N- to C-terminus: Ribosomal RNA large subunit methyltransferase K/L (712 aa).

The 112-residue stretch at 43–154 folds into the THUMP domain; sequence LAYRITLWTR…NGQLTISMNF (112 aa).

This sequence belongs to the methyltransferase superfamily. RlmKL family.

It localises to the cytoplasm. The catalysed reaction is guanosine(2445) in 23S rRNA + S-adenosyl-L-methionine = N(2)-methylguanosine(2445) in 23S rRNA + S-adenosyl-L-homocysteine + H(+). It catalyses the reaction guanosine(2069) in 23S rRNA + S-adenosyl-L-methionine = N(2)-methylguanosine(2069) in 23S rRNA + S-adenosyl-L-homocysteine + H(+). Specifically methylates the guanine in position 2445 (m2G2445) and the guanine in position 2069 (m7G2069) of 23S rRNA. This Shewanella frigidimarina (strain NCIMB 400) protein is Ribosomal RNA large subunit methyltransferase K/L.